The sequence spans 451 residues: UPF0210 protein lmo0534 (451 aa).

This sequence belongs to the UPF0210 family. As to quaternary structure, homodimer.

The protein is UPF0210 protein lmo0534 of Listeria monocytogenes serovar 1/2a (strain ATCC BAA-679 / EGD-e).